The following is a 364-amino-acid chain: Peroxisome biogenesis protein 3-2 (364 aa).

Residues Val15–Tyr32 traverse the membrane as a helical segment. The stretch at Asn33 to Ala62 forms a coiled coil.

The protein belongs to the peroxin-3 family.

The protein localises to the peroxisome membrane. Functionally, involved in morphology determination of peroxisomes, but not in import of peroxisomal matrix proteins. May act as a docking factor for PEX19 and be necessary for the import of peroxisomal membrane proteins in the peroxisomes. This is Peroxisome biogenesis protein 3-2 (PEX3-2) from Arabidopsis thaliana (Mouse-ear cress).